The primary structure comprises 748 residues: Sulfhydryl oxidase 1 (748 aa).

Positions 1–32 (MRRCGRLSGPPSLLLLLLLLSPLLFSGPGAYA) are cleaved as a signal peptide. The Thioredoxin domain occupies 33–159 (ARLSVLYSSS…RMRLIDALES (127 aa)). Residues C73 and C76 each act as nucleophile in the active site. Intrachain disulfides connect C73-C76 and C104-C113. Residues N133 and N246 are each glycosylated (N-linked (GlcNAc...) asparagine). An intrachain disulfide couples C396 to C408. The 108-residue stretch at 399-506 (SEPHFRGFPC…EDPHFPKVQW (108 aa)) folds into the ERV/ALR sulfhydryl oxidase domain. FAD-binding positions include R404, W411, H415, D454, H458, 481-488 (WTSHNRVN), K503, and W506. C452 and C455 form a disulfide bridge. C512 and C515 form a disulfide bridge. Residues 581–647 (GHEQAASAES…QENAPGQQHL (67 aa)) are disordered. Basic and acidic residues predominate over residues 628 to 638 (ERMEDHQRDMQ). A helical membrane pass occupies residues 711 to 731 (ISLCVGLYSVSFMGLLAMYTY).

The protein belongs to the quiescin-sulfhydryl oxidase (QSOX) family. As to quaternary structure, monomer. It depends on FAD as a cofactor. Post-translationally, N-glycosylated. O-glycosylated on Thr and Ser residues. As to expression, detected in skin (at protein level). Expressed in the seminal vesicles and skin.

The protein localises to the golgi apparatus membrane. The protein resides in the secreted. It catalyses the reaction 2 R'C(R)SH + O2 = R'C(R)S-S(R)CR' + H2O2. In terms of biological role, catalyzes the oxidation of sulfhydryl groups in peptide and protein thiols to disulfides with the reduction of oxygen to hydrogen peroxide. Plays a role in disulfide bond formation in a variety of extracellular proteins. In fibroblasts, required for normal incorporation of laminin into the extracellular matrix, and thereby for normal cell-cell adhesion and cell migration. In Mus musculus (Mouse), this protein is Sulfhydryl oxidase 1 (Qsox1).